The sequence spans 380 residues: MAKKVAICTLLYSRDYLPGALTLAYQLQKLLKHAVVEDEITLCLLIEKKLFGDEFKPQEIALIRSLFKEIIIIEPLKDQEKSIEKNKANLELLKRPELSHTLLKARLWELVQFDQVLFLDADTLPLNKEFFEILRLYPEQTRFQIAAVPDIGWPDMFNTGVLLLIPDLDMATSLQDFLIKTVSIDGADQGIFNQFFNPICNYSKEVLHKVSPLMEWIRLPFTYNVTMPNYGYQSSPAMNFFQQHIRLIHFIGTFKPWSRNTTDYDDHYYQLWRSTQRELYSECHLSNYFTHLQLGNIETETNFYHEPPCLQDLLNHGKRENQKHVDLDITSVDRNASQKSTAEKHDIEKPTSKPQSAFKFDWESTDYLDRVQRAFPKPDT.

Residues L10, Y16, and R95 each coordinate UDP. UDP-alpha-D-glucose contacts are provided by L10, Y16, R95, K104, D120, A121, D122, N158, T159, D185, D188, and Q189. Positions 120, 121, and 122 each coordinate UDP. D120 is a Mn(2+) binding site. D122 serves as a coordination point for Mn(2+). O-linked (Glc...) tyrosine glycosylation is found at Y230 and Y232. UDP contacts are provided by H249, G252, and K255. H249 serves as a coordination point for Mn(2+). UDP-alpha-D-glucose is bound by residues G252 and K255. The tract at residues S331–Q355 is disordered. Basic and acidic residues predominate over residues T341–T351. The O-linked (Glc...) tyrosine glycan is linked to Y367.

The protein belongs to the glycosyltransferase 8 family. Glycogenin subfamily. As to quaternary structure, interacts with glycogen synthase GSY2. Mn(2+) is required as a cofactor.

It is found in the cytoplasm. It localises to the vacuole. It carries out the reaction L-tyrosyl-[glycogenin] + UDP-alpha-D-glucose = alpha-D-glucosyl-L-tyrosyl-[glycogenin] + UDP + H(+). It catalyses the reaction [1,4-alpha-D-glucosyl](n)-L-tyrosyl-[glycogenin] + UDP-alpha-D-glucose = [1,4-alpha-D-glucosyl](n+1)-L-tyrosyl-[glycogenin] + UDP + H(+). In terms of biological role, self-glucosylating initiator of glycogen synthesis. It catalyzes the formation of a short alpha (1,4)-glucosyl chain covalently attached via a glucose 1-O-tyrosyl linkage to internal tyrosine residues and these chains act as primers for the elongation reaction catalyzed by glycogen synthase. Capable of transferring glucosyl residues to unbound acceptors such as free oligoglucans or oligoglucan derivatives. This is Glycogenin-2 from Saccharomyces cerevisiae (strain ATCC 204508 / S288c) (Baker's yeast).